Here is a 248-residue protein sequence, read N- to C-terminus: tRNA (guanine-N(1)-)-methyltransferase (248 aa).

S-adenosyl-L-methionine contacts are provided by residues G113 and 133–138; that span reads IGDYVL.

The protein belongs to the RNA methyltransferase TrmD family. In terms of assembly, homodimer.

The protein resides in the cytoplasm. It catalyses the reaction guanosine(37) in tRNA + S-adenosyl-L-methionine = N(1)-methylguanosine(37) in tRNA + S-adenosyl-L-homocysteine + H(+). Specifically methylates guanosine-37 in various tRNAs. The protein is tRNA (guanine-N(1)-)-methyltransferase of Shewanella baltica (strain OS223).